The following is a 361-amino-acid chain: Chorismate synthase (361 aa).

NADP(+)-binding residues include R48 and R54. Residues 125-127 (RSS), 238-239 (NA), G278, 293-297 (KPTSS), and R319 contribute to the FMN site.

The protein belongs to the chorismate synthase family. In terms of assembly, homotetramer. FMNH2 serves as cofactor.

The catalysed reaction is 5-O-(1-carboxyvinyl)-3-phosphoshikimate = chorismate + phosphate. It participates in metabolic intermediate biosynthesis; chorismate biosynthesis; chorismate from D-erythrose 4-phosphate and phosphoenolpyruvate: step 7/7. Catalyzes the anti-1,4-elimination of the C-3 phosphate and the C-6 proR hydrogen from 5-enolpyruvylshikimate-3-phosphate (EPSP) to yield chorismate, which is the branch point compound that serves as the starting substrate for the three terminal pathways of aromatic amino acid biosynthesis. This reaction introduces a second double bond into the aromatic ring system. This chain is Chorismate synthase, found in Shigella flexneri serotype 5b (strain 8401).